We begin with the raw amino-acid sequence, 257 residues long: Ribosomal RNA small subunit methyltransferase J (257 aa).

S-adenosyl-L-methionine-binding positions include 109–110 (RD), 125–126 (ER), and aspartate 179.

This sequence belongs to the methyltransferase superfamily. RsmJ family.

Its subcellular location is the cytoplasm. The enzyme catalyses guanosine(1516) in 16S rRNA + S-adenosyl-L-methionine = N(2)-methylguanosine(1516) in 16S rRNA + S-adenosyl-L-homocysteine + H(+). Functionally, specifically methylates the guanosine in position 1516 of 16S rRNA. This is Ribosomal RNA small subunit methyltransferase J from Actinobacillus succinogenes (strain ATCC 55618 / DSM 22257 / CCUG 43843 / 130Z).